The sequence spans 207 residues: Small ribosomal subunit protein uS4 (207 aa).

A disordered region spans residues 20–45 (TPKAARYMEKRPYAPGEHGRTKRKAD). In terms of domain architecture, S4 RNA-binding spans 93–158 (MRLDALVLRA…TEPFQVAAAG (66 aa)).

This sequence belongs to the universal ribosomal protein uS4 family. As to quaternary structure, part of the 30S ribosomal subunit. Contacts protein S5. The interaction surface between S4 and S5 is involved in control of translational fidelity.

One of the primary rRNA binding proteins, it binds directly to 16S rRNA where it nucleates assembly of the body of the 30S subunit. Functionally, with S5 and S12 plays an important role in translational accuracy. This chain is Small ribosomal subunit protein uS4, found in Leifsonia xyli subsp. xyli (strain CTCB07).